The following is a 309-amino-acid chain: Olfactory receptor 6C4 (309 aa).

At 1 to 23 (MKNRTMFGEFILLGLTNQPELQV) the chain is on the extracellular side. Residue Asn-3 is glycosylated (N-linked (GlcNAc...) asparagine). A helical membrane pass occupies residues 24-44 (MIFIFLFLTYMLSILGNLTII). Residues 45 to 52 (TLTLLDPH) lie on the Cytoplasmic side of the membrane. A helical transmembrane segment spans residues 53 to 73 (LQTPMYFFLRNFSFLEISFTS). The Extracellular segment spans residues 74–97 (IFIPRFLTSMTTGNKVISFAGCLT). A disulfide bond links Cys-95 and Cys-187. A helical transmembrane segment spans residues 98 to 118 (QYFFAIFLGATEFYLLASMSY). Residues 119 to 137 (DRYVAICKPLHYLTIMSSR) are Cytoplasmic-facing. The helical transmembrane segment at 138-158 (VCIQLVFCSWLGGFLAILPPI) threads the bilayer. The Extracellular portion of the chain corresponds to 159-195 (ILMTQVDFCVSNILNHYYCDYGPLVELACSDTSLLEL). Residues 196 to 215 (MVILLAVVTLMVTLVLVTLS) traverse the membrane as a helical segment. At 216–235 (YTYIIRTILRIPSAQQRTKA) the chain is on the cytoplasmic side. Residues 236 to 256 (FSTCSSHMIVISLSYGSCMFM) form a helical membrane-spanning segment. Topologically, residues 257–269 (YINPSAKEGGAFN) are extracellular. The chain crosses the membrane as a helical span at residues 270–290 (KGIAVLITSVTPLLNPFIYTL). At 291-309 (RNQQVKQAFKDSVKKIVKL) the chain is on the cytoplasmic side.

Belongs to the G-protein coupled receptor 1 family.

It localises to the cell membrane. In terms of biological role, odorant receptor. This chain is Olfactory receptor 6C4 (OR6C4), found in Homo sapiens (Human).